We begin with the raw amino-acid sequence, 501 residues long: uncharacterized protein (501 aa).

Residues 14–237 form the BAR domain; sequence EKFGFDRQKT…GFSKKRDNVN (224 aa). The residue at position 285 (T285) is a Phosphothreonine. Disordered stretches follow at residues 302 to 321 and 329 to 414; these read IASS…DVSD and SAVD…RSYS. Residues 309–320 show a composition bias toward basic and acidic residues; that stretch reads QHTEDNYNKDVS. Positions 390-402 are enriched in polar residues; sequence SQCNVSPSPSNIS. S414 is modified (phosphoserine). The SH3 domain occupies 421–487; sequence SSRKVVRMKY…PSNYCVPAHP (67 aa).

Its subcellular location is the cytoplasm. This is an uncharacterized protein from Schizosaccharomyces pombe (strain 972 / ATCC 24843) (Fission yeast).